Here is a 121-residue protein sequence, read N- to C-terminus: Small ribosomal subunit protein uS13 (121 aa).

The tract at residues 96–121 is disordered; the sequence is PVRGQNTKNNARTRKGKAVAIAGKKK. A compositionally biased stretch (basic residues) spans 106 to 121; it reads ARTRKGKAVAIAGKKK.

It belongs to the universal ribosomal protein uS13 family. Part of the 30S ribosomal subunit. Forms a loose heterodimer with protein S19. Forms two bridges to the 50S subunit in the 70S ribosome.

Functionally, located at the top of the head of the 30S subunit, it contacts several helices of the 16S rRNA. In the 70S ribosome it contacts the 23S rRNA (bridge B1a) and protein L5 of the 50S subunit (bridge B1b), connecting the 2 subunits; these bridges are implicated in subunit movement. Contacts the tRNAs in the A and P-sites. This Streptococcus gordonii (strain Challis / ATCC 35105 / BCRC 15272 / CH1 / DL1 / V288) protein is Small ribosomal subunit protein uS13.